The sequence spans 94 residues: Lipoate-protein ligase A subunit 2 (94 aa).

In terms of assembly, heterodimer composed of LplA and LplB.

It catalyses the reaction L-lysyl-[lipoyl-carrier protein] + (R)-lipoate + ATP = N(6)-[(R)-lipoyl]-L-lysyl-[lipoyl-carrier protein] + AMP + diphosphate + H(+). Its pathway is protein modification; protein lipoylation via exogenous pathway; protein N(6)-(lipoyl)lysine from lipoate: step 1/2. The protein operates within protein modification; protein lipoylation via exogenous pathway; protein N(6)-(lipoyl)lysine from lipoate: step 2/2. Functionally, part of a lipoate-protein ligase complex that catalyzes both the ATP-dependent activation of exogenously supplied lipoate to lipoyl-AMP and the transfer of the activated lipoyl onto the lipoyl domains of lipoate-dependent enzymes. Can also use octanoate as substrate. The chain is Lipoate-protein ligase A subunit 2 (lplB) from Thermoplasma acidophilum (strain ATCC 25905 / DSM 1728 / JCM 9062 / NBRC 15155 / AMRC-C165).